The following is a 358-amino-acid chain: UDP-N-acetylglucosamine--N-acetylmuramyl-(pentapeptide) pyrophosphoryl-undecaprenol N-acetylglucosamine transferase (358 aa).

UDP-N-acetyl-alpha-D-glucosamine-binding positions include 10–12 (TGG), Asn124, Arg165, Ser191, Ile246, and Gln291.

Belongs to the glycosyltransferase 28 family. MurG subfamily.

It localises to the cell inner membrane. It catalyses the reaction di-trans,octa-cis-undecaprenyl diphospho-N-acetyl-alpha-D-muramoyl-L-alanyl-D-glutamyl-meso-2,6-diaminopimeloyl-D-alanyl-D-alanine + UDP-N-acetyl-alpha-D-glucosamine = di-trans,octa-cis-undecaprenyl diphospho-[N-acetyl-alpha-D-glucosaminyl-(1-&gt;4)]-N-acetyl-alpha-D-muramoyl-L-alanyl-D-glutamyl-meso-2,6-diaminopimeloyl-D-alanyl-D-alanine + UDP + H(+). Its pathway is cell wall biogenesis; peptidoglycan biosynthesis. Functionally, cell wall formation. Catalyzes the transfer of a GlcNAc subunit on undecaprenyl-pyrophosphoryl-MurNAc-pentapeptide (lipid intermediate I) to form undecaprenyl-pyrophosphoryl-MurNAc-(pentapeptide)GlcNAc (lipid intermediate II). The chain is UDP-N-acetylglucosamine--N-acetylmuramyl-(pentapeptide) pyrophosphoryl-undecaprenol N-acetylglucosamine transferase from Citrifermentans bemidjiense (strain ATCC BAA-1014 / DSM 16622 / JCM 12645 / Bem) (Geobacter bemidjiensis).